The primary structure comprises 385 residues: D-alanine--D-alanine ligase (385 aa).

An ATP-grasp domain is found at 165–375 (KRVFTSFGLK…YPELVDRLVE (211 aa)). ATP is bound at residue 201–256 (AGEHGWPLFVKPARAGSSIGITKVDDLAGLDEAVAEAQRHDPKIIVEALLRGREIE). Mg(2+)-binding residues include Asp-329, Glu-342, and Asn-344.

It belongs to the D-alanine--D-alanine ligase family. The cofactor is Mg(2+). Requires Mn(2+) as cofactor.

The protein resides in the cytoplasm. It catalyses the reaction 2 D-alanine + ATP = D-alanyl-D-alanine + ADP + phosphate + H(+). Its pathway is cell wall biogenesis; peptidoglycan biosynthesis. In terms of biological role, cell wall formation. The polypeptide is D-alanine--D-alanine ligase (Streptomyces avermitilis (strain ATCC 31267 / DSM 46492 / JCM 5070 / NBRC 14893 / NCIMB 12804 / NRRL 8165 / MA-4680)).